Consider the following 1793-residue polypeptide: Chitin synthase 5 (1793 aa).

Residues 1-28 are disordered; that stretch reads MTNPRMSMYSLASEAPGGNRGTGQQSTQ. 5 N-linked (GlcNAc...) asparagine glycosylation sites follow: asparagine 70, asparagine 164, asparagine 638, asparagine 664, and asparagine 669. Transmembrane regions (helical) follow at residues 750-770 and 786-806; these read VWVF…LRYV and LVLC…IVAF. The region spanning 815–877 is the Cytochrome b5 heme-binding domain; the sequence is DKAYSQKEVD…GMNLDDYFVA (63 aa). Asparagine 897, asparagine 1019, and asparagine 1023 each carry an N-linked (GlcNAc...) asparagine glycan. Residues 1056–1076 traverse the membrane as a helical segment; the sequence is LLLAFSIMLCAVILLKFVSAL. Residue asparagine 1421 is glycosylated (N-linked (GlcNAc...) asparagine). The next 3 helical transmembrane spans lie at 1452 to 1472, 1479 to 1499, and 1507 to 1527; these read LFGT…IYLV, FPLI…LIFI, and IGWM…LPIY. 2 N-linked (GlcNAc...) asparagine glycosylation sites follow: asparagine 1534 and asparagine 1705. The region spanning 1735-1791 is the DEK-C domain; that stretch reads GPDDGMIVEAIRTVLMEVDLDTVTKKQVRALVEQRLQSELVGERRTFMDRQIDHELA.

It belongs to the chitin synthase family. Class V subfamily.

It localises to the cell membrane. The catalysed reaction is [(1-&gt;4)-N-acetyl-beta-D-glucosaminyl](n) + UDP-N-acetyl-alpha-D-glucosamine = [(1-&gt;4)-N-acetyl-beta-D-glucosaminyl](n+1) + UDP + H(+). Its function is as follows. Polymerizes chitin, a structural polymer of the cell wall and septum, by transferring the sugar moiety of UDP-GlcNAc to the non-reducing end of the growing chitin polymer. Regulates Germination and Tolerance to Hyperosmotic Stress. Plays a key role in pathogenicity. Likely contributes to post-penetration virulence. The sequence is that of Chitin synthase 5 from Verticillium dahliae (strain VdLs.17 / ATCC MYA-4575 / FGSC 10137) (Verticillium wilt).